Here is a 1710-residue protein sequence, read N- to C-terminus: Latrophilin Cirl (1710 aa).

The Extracellular segment spans residues 1–767 (MLPTILSISY…LFTMFDGNMR (767 aa)). Residues 25-114 (ACEGKKLTIE…KYLEAHYQCI (90 aa)) enclose the SUEL-type lectin domain. Asn142 carries an N-linked (GlcNAc...) asparagine glycan. The tract at residues 183 to 304 (QHTAVTHSTP…SGSVVPGNGS (122 aa)) is disordered. Composition is skewed to polar residues over residues 185–198 (TAVT…STTA) and 256–265 (NATSPSNTRI). Residue Asn256 is glycosylated (N-linked (GlcNAc...) asparagine). Composition is skewed to low complexity over residues 275 to 285 (DDGTLLTTKSS) and 295 to 304 (SGSVVPGNGS). Residues Asn302 and Asn341 are each glycosylated (N-linked (GlcNAc...) asparagine). Residues 376-400 (YDEYDDDPSSTTPATSSADCLHNSS) are disordered. Residues 384–394 (SSTTPATSSAD) show a composition bias toward low complexity. N-linked (GlcNAc...) asparagine glycosylation is found at Asn398, Asn655, Asn703, and Asn730. Positions 561 to 754 (RSVVQKVKNI…AILMDVVDEH (194 aa)) constitute a GAIN-B domain. 2 disulfide bridges follow: Cys709–Cys736 and Cys724–Cys738. The interval 709-754 (CVFWNYIDHAWSANGCSLESTNRTHSVCSCNHLTNFAILMDVVDEH) is GPS. A helical membrane pass occupies residues 768 to 788 (IFIYISIGICVVFIVIALLTL). Over 789 to 801 (KLFNGVFVKSART) the chain is Cytoplasmic. Residues 802–822 (SIYTSIYLCLLAIELLFLLGI) form a helical membrane-spanning segment. The Extracellular segment spans residues 823–828 (EQTETS). The chain crosses the membrane as a helical span at residues 829 to 849 (IFCGFITIFLHCAILSGTAWF). Residues 850–875 (CYEAFHSYSTLTSDELLLEVDQTPKV) are Cytoplasmic-facing. The helical transmembrane segment at 876 to 896 (NCYYLLSYGLSLSVVAISLVI) threads the bilayer. Residues 897–920 (DPSTYTQNDYCVLMEANALFYATF) are Extracellular-facing. The helical transmembrane segment at 921–941 (VMPVLVFFVAAIGYTFLSWII) threads the bilayer. The Cytoplasmic portion of the chain corresponds to 942-968 (MCRKSRTGLKTKEHTRLASVRFDIRCS). Residues 969–989 (FVFLLLLSAVWCSAYFYLRGA) traverse the membrane as a helical segment. Residues 990 to 999 (KMDDDTADVY) are Extracellular-facing. A helical transmembrane segment spans residues 1000 to 1020 (GYCFICFNTLLGLYIFVFHCI). The Cytoplasmic segment spans residues 1021-1710 (QNEKIRREYR…VRCYLEPLAK (690 aa)). Residues Ser1156, Ser1253, Ser1260, Ser1329, and Ser1330 each carry the phosphoserine modification. The segment at 1234–1259 (KPNSGQHGKKKRGAGGVPASPSGSLH) is disordered. Disordered stretches follow at residues 1452–1540 (GGGS…SDER) and 1568–1690 (DYGA…QQRH). Low complexity predominate over residues 1458-1483 (GGSVSSRSQQQQLKKQQQQQSLAQQR). Composition is skewed to acidic residues over residues 1491–1505 (DDDD…EEAT) and 1515–1528 (CDED…DLED). A compositionally biased stretch (polar residues) spans 1638-1650 (QTPAQKRQQLQKL). Low complexity predominate over residues 1651-1672 (SPQSTTSSSSHTSHSNPNPHPH). Residues 1673-1689 (QLTHPHPHQHPPHHQQR) show a composition bias toward basic residues.

Belongs to the G-protein coupled receptor 2 family. LN-TM7 subfamily. As to quaternary structure, forms a heterodimer, consisting of a large extracellular region non-covalently linked to a seven-transmembrane moiety. In terms of processing, proteolytically cleaved into 2 subunits, an extracellular subunit and a seven-transmembrane subunit.

It is found in the cell membrane. The protein is Latrophilin Cirl of Drosophila erecta (Fruit fly).